The chain runs to 240 residues: Eukaryotic translation initiation factor 3 subunit K (240 aa).

A PCI domain is found at tyrosine 41–lysine 221.

It belongs to the eIF-3 subunit K family. As to quaternary structure, component of the eukaryotic translation initiation factor 3 (eIF-3) complex.

The protein localises to the cytoplasm. In terms of biological role, component of the eukaryotic translation initiation factor 3 (eIF-3) complex, which is involved in protein synthesis of a specialized repertoire of mRNAs and, together with other initiation factors, stimulates binding of mRNA and methionyl-tRNAi to the 40S ribosome. The eIF-3 complex specifically targets and initiates translation of a subset of mRNAs involved in cell proliferation. The chain is Eukaryotic translation initiation factor 3 subunit K from Caenorhabditis elegans.